We begin with the raw amino-acid sequence, 104 residues long: DNA-directed RNA polymerase subunit Rpo13 (104 aa).

Disordered stretches follow at residues Met-1–Phe-33 and Arg-78–Gly-104. Acidic residues predominate over residues Thr-7 to Asp-31. The span at Ser-80–Gly-104 shows a compositional bias: basic residues.

This sequence belongs to the archaeal Rpo13 RNA polymerase subunit family. Part of the 13-subunit RNA polymerase complex.

It localises to the cytoplasm. The enzyme catalyses RNA(n) + a ribonucleoside 5'-triphosphate = RNA(n+1) + diphosphate. Its function is as follows. DNA-dependent RNA polymerase (RNAP) catalyzes the transcription of DNA into RNA using the four ribonucleoside triphosphates as substrates. Probably binds dsDNA. The protein is DNA-directed RNA polymerase subunit Rpo13 of Saccharolobus solfataricus (strain ATCC 35092 / DSM 1617 / JCM 11322 / P2) (Sulfolobus solfataricus).